The chain runs to 373 residues: WAT1-related protein At4g30420 (373 aa).

Transmembrane regions (helical) follow at residues Ala-2 to Val-22, Val-29 to Ser-49, Ile-55 to Gly-75, Met-94 to Gly-114, Gly-125 to Leu-145, Trp-173 to Leu-193, Leu-205 to Phe-225, Cys-244 to Ala-264, Phe-270 to Phe-290, and Ile-294 to Trp-314. EamA domains lie at Cys-9–Cys-135 and Cys-186–Leu-313.

Belongs to the drug/metabolite transporter (DMT) superfamily. Plant drug/metabolite exporter (P-DME) (TC 2.A.7.4) family.

It localises to the membrane. The polypeptide is WAT1-related protein At4g30420 (Arabidopsis thaliana (Mouse-ear cress)).